The sequence spans 401 residues: Argininosuccinate synthase (401 aa).

Position 8 to 16 (A8 to S16) interacts with ATP. Y85 is a binding site for L-citrulline. An ATP-binding site is contributed by G115. Positions 117, 121, and 122 each coordinate L-aspartate. An L-citrulline-binding site is contributed by N121. Positions 125, 173, 182, 258, and 270 each coordinate L-citrulline.

It belongs to the argininosuccinate synthase family. Type 1 subfamily. Homotetramer.

It localises to the cytoplasm. The enzyme catalyses L-citrulline + L-aspartate + ATP = 2-(N(omega)-L-arginino)succinate + AMP + diphosphate + H(+). The protein operates within amino-acid biosynthesis; L-arginine biosynthesis; L-arginine from L-ornithine and carbamoyl phosphate: step 2/3. The sequence is that of Argininosuccinate synthase from Staphylococcus saprophyticus subsp. saprophyticus (strain ATCC 15305 / DSM 20229 / NCIMB 8711 / NCTC 7292 / S-41).